A 181-amino-acid chain; its full sequence is Oligoribonuclease (181 aa).

The Exonuclease domain maps to 8–171 (LVWLDMEMTG…ADIYESIDEL (164 aa)). Tyr-129 is an active-site residue.

The protein belongs to the oligoribonuclease family.

The protein localises to the cytoplasm. Functionally, 3'-to-5' exoribonuclease specific for small oligoribonucleotides. The sequence is that of Oligoribonuclease from Bordetella bronchiseptica (strain ATCC BAA-588 / NCTC 13252 / RB50) (Alcaligenes bronchisepticus).